Here is a 625-residue protein sequence, read N- to C-terminus: DNA-directed RNA polymerase subunit gamma (625 aa).

C71, C73, C86, and C89 together coordinate Zn(2+). Mg(2+) is bound by residues D467, D469, and D471.

Belongs to the RNA polymerase beta' chain family. RpoC1 subfamily. In terms of assembly, in cyanobacteria the RNAP catalytic core is composed of 2 alpha, 1 beta, 1 beta', 1 gamma and 1 omega subunit. When a sigma factor is associated with the core the holoenzyme is formed, which can initiate transcription. Mg(2+) serves as cofactor. Requires Zn(2+) as cofactor.

It carries out the reaction RNA(n) + a ribonucleoside 5'-triphosphate = RNA(n+1) + diphosphate. Functionally, DNA-dependent RNA polymerase catalyzes the transcription of DNA into RNA using the four ribonucleoside triphosphates as substrates. The protein is DNA-directed RNA polymerase subunit gamma of Gloeothece citriformis (strain PCC 7424) (Cyanothece sp. (strain PCC 7424)).